The following is a 72-amino-acid chain: Translation initiation factor IF-1 (72 aa).

Residues 1-72 (MSKEENIEMQ…TKGRIIFRSR (72 aa)) form the S1-like domain.

The protein belongs to the IF-1 family. As to quaternary structure, component of the 30S ribosomal translation pre-initiation complex which assembles on the 30S ribosome in the order IF-2 and IF-3, IF-1 and N-formylmethionyl-tRNA(fMet); mRNA recruitment can occur at any time during PIC assembly.

The protein resides in the cytoplasm. In terms of biological role, one of the essential components for the initiation of protein synthesis. Stabilizes the binding of IF-2 and IF-3 on the 30S subunit to which N-formylmethionyl-tRNA(fMet) subsequently binds. Helps modulate mRNA selection, yielding the 30S pre-initiation complex (PIC). Upon addition of the 50S ribosomal subunit IF-1, IF-2 and IF-3 are released leaving the mature 70S translation initiation complex. The sequence is that of Translation initiation factor IF-1 from Buchnera aphidicola subsp. Acyrthosiphon pisum (strain APS) (Acyrthosiphon pisum symbiotic bacterium).